Here is a 283-residue protein sequence, read N- to C-terminus: Syntaxin VAM3 (283 aa).

The interval 1–26 (MSFFDIEAQSSKGNSQQEPQFSTNQK) is disordered. Residues 1-261 (MSFFDIEAQS…ADQHQRDRNK (261 aa)) lie on the Cytoplasmic side of the membrane. Residues 8-25 (AQSSKGNSQQEPQFSTNQ) show a composition bias toward polar residues. Coiled-coil stretches lie at residues 28-48 (KELS…EKEC) and 84-111 (LIHQ…SYNQ). Disordered regions lie at residues 116 to 146 (FPLK…DPES) and 162 to 182 (NEGQ…QGLS). Over residues 127-144 (SKERKDIHPRTEAVRQDP) the composition is skewed to basic and acidic residues. A coiled-coil region spans residues 169 to 189 (QLQEEQEQQQQGLSQEELDFQ). One can recognise a t-SNARE coiled-coil homology domain in the interval 190–252 (TIIHQERSQQ…QNANKQLTRA (63 aa)). A helical; Anchor for type IV membrane protein transmembrane segment spans residues 262-282 (CGKVTLIIIIVVCMVVLLAVL). A topological domain (vacuolar) is located at residue Ser283.

The protein belongs to the syntaxin family. As to quaternary structure, associates with VAM7.

It is found in the vacuole membrane. Required for vacuolar assembly. Provides the t-SNARE function in a late step of the vacuolar assembly. Required for homotypic vacuole membrane fusion, autophagy and fusion of biosynthetic transport vesicles with the vacuole. Required for the delivery of alpha-factor receptor-ligand complexes to the vacuole. This chain is Syntaxin VAM3 (VAM3), found in Saccharomyces cerevisiae (strain ATCC 204508 / S288c) (Baker's yeast).